Consider the following 1331-residue polypeptide: DNA-directed RNA polymerase subunit beta' (1331 aa).

C60, C62, C75, and C78 together coordinate Zn(2+). Mg(2+) contacts are provided by D535, D537, and D539. The Zn(2+) site is built by C902, C979, C986, and C989.

Belongs to the RNA polymerase beta' chain family. The RNAP catalytic core consists of 2 alpha, 1 beta, 1 beta' and 1 omega subunit. When a sigma factor is associated with the core the holoenzyme is formed, which can initiate transcription. Requires Mg(2+) as cofactor. It depends on Zn(2+) as a cofactor.

The catalysed reaction is RNA(n) + a ribonucleoside 5'-triphosphate = RNA(n+1) + diphosphate. DNA-dependent RNA polymerase catalyzes the transcription of DNA into RNA using the four ribonucleoside triphosphates as substrates. This is DNA-directed RNA polymerase subunit beta' from Corynebacterium aurimucosum (strain ATCC 700975 / DSM 44827 / CIP 107346 / CN-1) (Corynebacterium nigricans).